The chain runs to 75 residues: Translational regulator CsrA (75 aa).

It belongs to the CsrA/RsmA family. Homodimer; the beta-strands of each monomer intercalate to form a hydrophobic core, while the alpha-helices form wings that extend away from the core.

The protein resides in the cytoplasm. A translational regulator that binds mRNA to regulate translation initiation and/or mRNA stability. Usually binds in the 5'-UTR at or near the Shine-Dalgarno sequence preventing ribosome-binding, thus repressing translation. Its main target seems to be the major flagellin gene, while its function is anatagonized by FliW. The sequence is that of Translational regulator CsrA from Treponema denticola (strain ATCC 35405 / DSM 14222 / CIP 103919 / JCM 8153 / KCTC 15104).